Consider the following 774-residue polypeptide: E3 ubiquitin-protein ligase RFWD3 (774 aa).

Disordered regions lie at residues 32 to 126 and 203 to 281; these read GTIE…TAGA and PYPL…SAME. 2 positions are modified to phosphoserine; by ATM and ATR: serine 59 and serine 75. Acidic residues predominate over residues 92-103; that stretch reads LTEEVQPSEENM. Residues 108 to 121 are compositionally biased toward polar residues; sequence PGTSEEPSQGSGAN. The segment covering 223–242 has biased composition (acidic residues); that stretch reads SDSDGSAEDEEVVVQAEEPE. Residues 288-332 form an RING-type; degenerate zinc finger; that stretch reads CTICLEQWTNAGDHRISALRCGHLFGFRCISKWLKGQTRKCPQCN. Residues 358 to 403 adopt a coiled-coil conformation; sequence RMKSDLLNEQMLRKQAELESAQCRLQLQVLIDKCTKLNSRVQDLEK. WD repeat units follow at residues 493–535, 536–568, and 583–628; these read IPMH…VVQT, YNTG…LIYD, and KARC…SHKP.

As to quaternary structure, interacts with MDM2 and p53/TP53. Binds to the RPA complex via direct interaction with RPA2. Interacts with RAD51. Post-translationally, phosphorylated at Ser-59 and Ser-75 upon DNA damage by ATM or ATR. ATM phosphorylation occurs at early times upon DNA damage, while ATR is the major kinase at later times. Phosphorylation by ATM and ATR is required to stabilize p53/TP53. Part of the phosphorylation depends upon RPA2 presence.

The protein localises to the nucleus. Its subcellular location is the PML body. The protein resides in the cytoplasm. The catalysed reaction is S-ubiquitinyl-[E2 ubiquitin-conjugating enzyme]-L-cysteine + [acceptor protein]-L-lysine = [E2 ubiquitin-conjugating enzyme]-L-cysteine + N(6)-ubiquitinyl-[acceptor protein]-L-lysine.. It participates in protein modification; protein ubiquitination. In terms of biological role, E3 ubiquitin-protein ligase required for the repair of DNA interstrand cross-links (ICL) in response to DNA damage. Plays a key role in RPA-mediated DNA damage signaling and repair. Acts by mediating ubiquitination of the RPA complex (RPA1, RPA2 and RPA3 subunits) and RAD51 at stalled replication forks, leading to remove them from DNA damage sites and promote homologous recombination. Also mediates the ubiquitination of p53/TP53 in the late response to DNA damage, and acts as a positive regulator of p53/TP53 stability, thereby regulating the G1/S DNA damage checkpoint. May act by catalyzing the formation of short polyubiquitin chains on p53/TP53 that are not targeted to the proteasome. In response to ionizing radiation, interacts with MDM2 and enhances p53/TP53 ubiquitination, possibly by restricting MDM2 from extending polyubiquitin chains on ubiquitinated p53/TP53. Required to translesion DNA synthesis across DNA-protein cross-link adducts by catalyzing ubiquitination of proteins on single-stranded DNA (ssDNA). The sequence is that of E3 ubiquitin-protein ligase RFWD3 (Rfwd3) from Mus musculus (Mouse).